The sequence spans 218 residues: Probable transaldolase (218 aa).

Catalysis depends on Lys87, which acts as the Schiff-base intermediate with substrate.

This sequence belongs to the transaldolase family. Type 3B subfamily.

It is found in the cytoplasm. The enzyme catalyses D-sedoheptulose 7-phosphate + D-glyceraldehyde 3-phosphate = D-erythrose 4-phosphate + beta-D-fructose 6-phosphate. It functions in the pathway carbohydrate degradation; pentose phosphate pathway; D-glyceraldehyde 3-phosphate and beta-D-fructose 6-phosphate from D-ribose 5-phosphate and D-xylulose 5-phosphate (non-oxidative stage): step 2/3. Transaldolase is important for the balance of metabolites in the pentose-phosphate pathway. The sequence is that of Probable transaldolase from Phocaeicola vulgatus (strain ATCC 8482 / DSM 1447 / JCM 5826 / CCUG 4940 / NBRC 14291 / NCTC 11154) (Bacteroides vulgatus).